A 233-amino-acid chain; its full sequence is Probable translation initiation factor, mitochondrial (233 aa).

The transit peptide at 1–39 (MNSYLQFPHRKLFIQFSYSLTSVFRKCQSRTFMNSQFAS) directs the protein to the mitochondrion.

This sequence belongs to the IF-3 family.

It localises to the mitochondrion. May be involved in mitochondrial translation initiation. The polypeptide is Probable translation initiation factor, mitochondrial (Schizosaccharomyces pombe (strain 972 / ATCC 24843) (Fission yeast)).